Reading from the N-terminus, the 568-residue chain is 4-hydroxy-7-methoxy-3-oxo-3,4-dihydro-2H-1,4-benzoxazin-2-yl glucoside beta-D-glucosidase, chloroplastic (568 aa).

Residues 1–50 (MALLVGGTLNPTTHLSLRSRAGRNSENVWLRSAASSQTSKGRFCNLTVRA) constitute a chloroplast transit peptide. A beta-D-glucoside contacts are provided by residues Gln-92, His-194, and 239–240 (NE). Glu-240 (proton donor) is an active-site residue. Cys-259 and Cys-265 form a disulfide bridge. A beta-D-glucoside contacts are provided by residues Tyr-383, Glu-456, Trp-504, 511-512 (EW), and Phe-520. Glu-456 (nucleophile) is an active-site residue.

The protein belongs to the glycosyl hydrolase 1 family. Homohexamer. As to expression, expressed in seedlings, mesocotyl, coleoptile, leaf sheath, and roots.

The protein localises to the plastid. The protein resides in the chloroplast. The catalysed reaction is DIMBOA beta-D-glucoside + H2O = DIMBOA + D-glucose. It carries out the reaction DIBOA beta-D-glucoside + H2O = DIBOA + D-glucose. The enzyme catalyses Hydrolysis of terminal, non-reducing beta-D-glucosyl residues with release of beta-D-glucose.. Inhibited by castanospermine, Ag(+) and Cu(2+). 34% inhibition by Zn(2+) and not affected by EDTA. Its function is as follows. Involved in defense of young plant parts against pests via the production of benzoxazolinones (hydroxamic acids) from hydroxamic acid glucosides. The preferred substrate is DIBOA-beta-D-glucoside. Can also use esculin and genistein glucoside as substrates, but no activity with salicin, p-nitrophenyl-alpha-glucoside or substrates related to cell wall components. In Secale cereale (Rye), this protein is 4-hydroxy-7-methoxy-3-oxo-3,4-dihydro-2H-1,4-benzoxazin-2-yl glucoside beta-D-glucosidase, chloroplastic.